A 465-amino-acid polypeptide reads, in one-letter code: Probable M18 family aminopeptidase 1 (465 aa).

Zn(2+) contacts are provided by His105, His180, and His441.

The protein belongs to the peptidase M18 family. The cofactor is Zn(2+).

The sequence is that of Probable M18 family aminopeptidase 1 (apeA) from Clostridium acetobutylicum (strain ATCC 824 / DSM 792 / JCM 1419 / IAM 19013 / LMG 5710 / NBRC 13948 / NRRL B-527 / VKM B-1787 / 2291 / W).